Reading from the N-terminus, the 195-residue chain is 3-isopropylmalate dehydratase small subunit (195 aa).

It belongs to the LeuD family. LeuD type 1 subfamily. Heterodimer of LeuC and LeuD.

It catalyses the reaction (2R,3S)-3-isopropylmalate = (2S)-2-isopropylmalate. It participates in amino-acid biosynthesis; L-leucine biosynthesis; L-leucine from 3-methyl-2-oxobutanoate: step 2/4. Its function is as follows. Catalyzes the isomerization between 2-isopropylmalate and 3-isopropylmalate, via the formation of 2-isopropylmaleate. This is 3-isopropylmalate dehydratase small subunit from Koribacter versatilis (strain Ellin345).